The sequence spans 294 residues: Arsenical-resistance protein ARR1 (294 aa).

Residues 1 to 11 show a composition bias toward basic residues; that stretch reads MAKPRGRKGGR. The interval 1 to 29 is disordered; sequence MAKPRGRKGGRKPSLTPPKNKRAAQLRAS. Residues 22–45 are basic motif; the sequence is RAAQLRASQNAFRKRKLERLEELE. Positions 22–72 constitute a bZIP domain; sequence RAAQLRASQNAFRKRKLERLEELEKKEAQLTVTNDQIHILKKENELLHFML. The segment at 44 to 72 is leucine-zipper; sequence LEKKEAQLTVTNDQIHILKKENELLHFML. Cys132, Cys137, and Cys274 together coordinate arsenite.

This sequence belongs to the bZIP family. YAP subfamily. As to quaternary structure, homodimer. Phosphorylation by HOG1 promotes nuclear localization in the presence of arsenic.

Its subcellular location is the cytoplasm. The protein localises to the nucleus. Its activity is regulated as follows. Transcriptional activity is controlled by regulated degradation by the ubiquitin-proteasome pathway in absence of arsenic. Arsenic-exposure results in stabilization and increased transcriptional activity. Transcription activator required for resistance to arsenic compounds and for a regulated expression of ACR2, ACR3 and YCF1. The polypeptide is Arsenical-resistance protein ARR1 (Saccharomyces cerevisiae (strain ATCC 204508 / S288c) (Baker's yeast)).